The following is a 120-amino-acid chain: Reprimo-like protein (120 aa).

A helical transmembrane segment spans residues 67-87; sequence VAQIAVLCVLSLTVVFGVFFL. Position 109 is a phosphoserine (Ser-109).

Belongs to the reprimo family.

It is found in the membrane. The sequence is that of Reprimo-like protein (RPRML) from Homo sapiens (Human).